A 249-amino-acid polypeptide reads, in one-letter code: Transcription factor MYB90 (249 aa).

2 HTH myb-type domains span residues 5 to 57 (SKGL…LNYL) and 58 to 112 (KPSI…SKKH). 2 consecutive DNA-binding regions (H-T-H motif) follow at residues 33 to 57 (WHQV…LNYL) and 85 to 108 (WSLI…NTHL).

In terms of assembly, interacts with BHLH12/MYC1, BHLH1/GL3/MYC6, BHLH2/EGL3/MYC146, and BHLH42/TT8. Expressed only in leaves and siliques.

It localises to the nucleus. Functionally, transcription activator, when associated with BHLH12/MYC1, EGL3, or GL3. Promotes the synthesis of phenylpropanoid-derived compounds such as anthocyanins. This Arabidopsis thaliana (Mouse-ear cress) protein is Transcription factor MYB90 (MYB90).